A 122-amino-acid polypeptide reads, in one-letter code: Large ribosomal subunit protein uL14 (122 aa).

The protein belongs to the universal ribosomal protein uL14 family. In terms of assembly, part of the 50S ribosomal subunit. Forms a cluster with proteins L3 and L19. In the 70S ribosome, L14 and L19 interact and together make contacts with the 16S rRNA in bridges B5 and B8.

Binds to 23S rRNA. Forms part of two intersubunit bridges in the 70S ribosome. This is Large ribosomal subunit protein uL14 from Ruegeria pomeroyi (strain ATCC 700808 / DSM 15171 / DSS-3) (Silicibacter pomeroyi).